We begin with the raw amino-acid sequence, 509 residues long: Dihydrolipoyl dehydrogenase, mitochondrial (509 aa).

Residues 1–35 (MQSWSRVYCSLAKRGHFNRISHGLQGLSAVPLRTY) constitute a mitochondrion transit peptide. The residue at position 66 (lysine 66) is an N6-acetyllysine; alternate. Position 66 is an N6-succinyllysine; alternate (lysine 66). FAD-binding positions include 71–80 (EKNETLGGTC) and lysine 89. A disulfide bridge links cysteine 80 with cysteine 85. 4 positions are modified to N6-acetyllysine; alternate: lysine 104, lysine 122, lysine 132, and lysine 143. 4 positions are modified to N6-succinyllysine; alternate: lysine 104, lysine 122, lysine 132, and lysine 143. FAD is bound at residue glycine 154. N6-succinyllysine is present on residues lysine 159 and lysine 166. Position 183-185 (183-185 (TGS)) interacts with FAD. Residues 220–227 (GAGVIGVE) and glutamate 243 each bind NAD(+). N6-succinyllysine occurs at positions 273 and 277. Valine 278 lines the NAD(+) pocket. 2 positions are modified to phosphoserine: serine 285 and serine 297. Glycine 314 is an NAD(+) binding site. Residue lysine 346 is modified to N6-acetyllysine. Residues aspartate 355 and 361–364 (MLAH) contribute to the FAD site. N6-acetyllysine; alternate is present on lysine 410. Lysine 410 carries the N6-succinyllysine; alternate modification. N6-acetyllysine occurs at positions 417 and 420. At lysine 430 the chain carries N6-succinyllysine. Histidine 487 (proton acceptor) is an active-site residue. Residue serine 502 is modified to Phosphoserine. Position 505 is an N6-acetyllysine; alternate (lysine 505). Lysine 505 bears the N6-succinyllysine; alternate mark.

Belongs to the class-I pyridine nucleotide-disulfide oxidoreductase family. Homodimer. Part of the multimeric pyruvate dehydrogenase complex that contains multiple copies of pyruvate dehydrogenase (subunits PDHA (PDHA1 or PDHA2) and PDHB, E1), dihydrolipoamide acetyltransferase (DLAT, E2) and lipoamide dehydrogenase (DLD, E3). These subunits are bound to an inner core composed of about 48 DLAT and 12 PDHX molecules (by non covalent bonds). The 2-oxoglutarate dehydrogenase complex is composed of OGDH (2-oxoglutarate dehydrogenase; E1), DLST (dihydrolipoamide succinyltransferase; E2), DLD (dihydrolipoamide dehydrogenase; E3) and the assembly factor KGD4. It contains multiple copies of the three enzymatic components (E1, E2 and E3). In the nucleus, the 2-oxoglutarate dehydrogenase complex associates with KAT2A. Interacts with PDHX. The cofactor is FAD. In terms of processing, tyrosine phosphorylated.

The protein localises to the mitochondrion matrix. It is found in the nucleus. It localises to the cell projection. Its subcellular location is the cilium. The protein resides in the flagellum. The protein localises to the cytoplasmic vesicle. It is found in the secretory vesicle. It localises to the acrosome. The catalysed reaction is N(6)-[(R)-dihydrolipoyl]-L-lysyl-[protein] + NAD(+) = N(6)-[(R)-lipoyl]-L-lysyl-[protein] + NADH + H(+). In terms of biological role, lipoamide dehydrogenase is a component of the glycine cleavage system as well as an E3 component of three alpha-ketoacid dehydrogenase complexes (pyruvate-, alpha-ketoglutarate-, and branched-chain amino acid-dehydrogenase complex). The 2-oxoglutarate dehydrogenase complex is mainly active in the mitochondrion. A fraction of the 2-oxoglutarate dehydrogenase complex also localizes in the nucleus and is required for lysine succinylation of histones: associates with KAT2A on chromatin and provides succinyl-CoA to histone succinyltransferase KAT2A. In monomeric form may have additional moonlighting function as serine protease. Involved in the hyperactivation of spermatazoa during capacitation and in the spermatazoal acrosome reaction. The protein is Dihydrolipoyl dehydrogenase, mitochondrial (DLD) of Macaca fascicularis (Crab-eating macaque).